The primary structure comprises 150 residues: Transcriptional repressor NrdR (150 aa).

A disordered region spans residues methionine 1–glycine 22. A zinc finger lies at cysteine 3 to cysteine 34. The region spanning leucine 49–arginine 136 is the ATP-cone domain.

Belongs to the NrdR family. Zn(2+) serves as cofactor.

In terms of biological role, negatively regulates transcription of bacterial ribonucleotide reductase nrd genes and operons by binding to NrdR-boxes. The protein is Transcriptional repressor NrdR of Deinococcus geothermalis (strain DSM 11300 / CIP 105573 / AG-3a).